The following is a 553-amino-acid chain: CTP synthase (553 aa).

Residues 1–266 (MKYIFVTGGV…GKAVEDLLGL (266 aa)) are amidoligase domain. CTP is bound at residue Ser12. Ser12 is a binding site for UTP. Residue 13 to 18 (SLGKGV) participates in ATP binding. L-glutamine is bound at residue Tyr53. Residue Asp70 participates in ATP binding. 2 residues coordinate Mg(2+): Asp70 and Glu140. CTP contacts are provided by residues 147–149 (DIE), 187–192 (KTKPTQ), and Lys223. UTP is bound by residues 187–192 (KTKPTQ) and Lys223. The Glutamine amidotransferase type-1 domain occupies 291–541 (TIAIAGKYTE…VAAALQSGPS (251 aa)). Gly353 serves as a coordination point for L-glutamine. The Nucleophile; for glutamine hydrolysis role is filled by Cys380. Residues 381–384 (LGMQ), Glu404, and Arg464 each bind L-glutamine. Active-site residues include His514 and Glu516.

This sequence belongs to the CTP synthase family. In terms of assembly, homotetramer.

The catalysed reaction is UTP + L-glutamine + ATP + H2O = CTP + L-glutamate + ADP + phosphate + 2 H(+). It carries out the reaction L-glutamine + H2O = L-glutamate + NH4(+). It catalyses the reaction UTP + NH4(+) + ATP = CTP + ADP + phosphate + 2 H(+). The protein operates within pyrimidine metabolism; CTP biosynthesis via de novo pathway; CTP from UDP: step 2/2. With respect to regulation, allosterically activated by GTP, when glutamine is the substrate; GTP has no effect on the reaction when ammonia is the substrate. The allosteric effector GTP functions by stabilizing the protein conformation that binds the tetrahedral intermediate(s) formed during glutamine hydrolysis. Inhibited by the product CTP, via allosteric rather than competitive inhibition. Functionally, catalyzes the ATP-dependent amination of UTP to CTP with either L-glutamine or ammonia as the source of nitrogen. Regulates intracellular CTP levels through interactions with the four ribonucleotide triphosphates. This chain is CTP synthase, found in Deinococcus geothermalis (strain DSM 11300 / CIP 105573 / AG-3a).